The primary structure comprises 2549 residues: Serine/threonine-protein kinase mTOR (2549 aa).

The residue at position 1 (methionine 1) is an N-acetylmethionine. The interval 1–651 is interaction with NBN; it reads MLGTGPATAT…HVVSQTAVQV (651 aa). 32 HEAT repeats span residues 16–53, 55–99, 100–137, 138–179, 180–220, 222–276, 277–313, 314–364, 365–409, 410–445, 446–494, 495–529, 530–563, 564–596, 597–636, 637–683, 686–724, 727–766, 769–811, 814–853, 857–893, 894–942, 943–988, 989–1027, 1029–1068, 1069–1105, 1106–1144, 1145–1188, 1189–1225, 1226–1273, 1274–1311, and 1312–1345; these read SSNV…MELR, MSQE…VEGG, NSTR…AMAG, DTFT…AISV, PTFF…LILT, QREP…RISS, MEGE…PRHI, TPFT…CCRD, LMEE…AFTD, TQYL…VAVR, SEFK…RAMG, PGIQ…RQIP, QLKK…GLAH, QLAS…EFEG, HSLT…SIHL, ISGH…DERF, HLAQ…MNPA, MPFL…NAPR, RPYM…VSGL, RKWV…STGY, PYRK…LLGA, LDPY…GNLP, LDEF…KCVQ, FLPQ…KSHI, PYMD…GEFK, LYLP…LFGA, NLDD…RLTE, SLDF…GKKY, QIFI…LADE, EEDP…GAAR, RVSK…QAYN, and PMAR…ELAL. Serine 567 carries the post-translational modification Phosphoserine. A Phosphothreonine modification is found at threonine 1162. The residue at position 1218 (lysine 1218) is an N6-acetyllysine. Serine 1261 bears the Phosphoserine mark. 16 TPR repeats span residues 1346–1382, 1383–1408, 1409–1442, 1443–1473, 1474–1507, 1508–1541, 1542–1574, 1575–1614, 1615–1649, 1650–1693, 1694–1731, 1732–1786, 1787–1846, 1898–1930, 1931–1970, and 1971–2005; these read TSQD…GIVL, LGER…QKGP, TPAI…HFGE, LEIQ…NKDD, PELM…VNDE, TQAK…RDTH, DGAF…LDAE, LTAM…RREI, IRQI…PHED, MRTW…PTVH, PQVT…AQHA, IATE…DRSW, YKAW…STEG, NNLQ…VKAI, QIDT…YHPQ, and ALIY…SNTL. One can recognise an FAT domain in the interval 1382–1982; sequence LLGERAAKCR…IYPLTVASKS (601 aa). 1D-myo-inositol hexakisphosphate-binding residues include lysine 1662, lysine 1702, and arginine 1749. Residues 1812 to 1867 form a disordered region; it reads DEKKKLRHASGANITNATTTATTAASAAAATSTEGSNSESEAESNESSPTPSPLQK. Low complexity predominate over residues 1826–1860; sequence TNATTTATTAASAAAATSTEGSNSESEAESNESSP. Residues 2012–2144 form a sufficient for interaction with the FKBP1A/rapamycin complex region; sequence VSEELIRVAI…DLELAVPGTY (133 aa). Residue lysine 2066 forms a Glycyl lysine isopeptide (Lys-Gly) (interchain with G-Cter in ubiquitin) linkage. In terms of domain architecture, PI3K/PI4K catalytic spans 2156–2469; sequence IAPSLQVITS…GVELGEPAHK (314 aa). Serine 2159 carries the post-translational modification Phosphoserine. A G-loop region spans residues 2162–2168; it reads VITSKQR. At threonine 2164 the chain carries Phosphothreonine. 2 residues coordinate ATP: serine 2165 and glutamine 2167. Threonine 2173 carries the phosphothreonine; by PKB/AKT1 modification. The ATP site is built by leucine 2185, lysine 2187, glutamate 2190, tyrosine 2225, glycine 2238, tryptophan 2239, valine 2240, and threonine 2245. The interaction with MLST8 stretch occupies residues 2258–2296; the sequence is KILLNIEHRIMLRMAPDYDHLTLMQKVEVFEHAVNNTAG. The catalytic loop stretch occupies residues 2335–2343; that stretch reads GLGDRHPSN. Asparagine 2343 lines the Mg(2+) pocket. Methionine 2345 and isoleucine 2356 together coordinate ATP. Residues 2355 to 2380 form an activation loop region; the sequence is HIDFGDCFEVAMTREKFPEKIPFRLT. Residue aspartate 2357 coordinates Mg(2+). Phosphothreonine; by RPS6KB1 is present on threonine 2446. Residue serine 2448 is modified to Phosphoserine; by RPS6KB1. At serine 2478 the chain carries Phosphoserine. Serine 2481 is modified (phosphoserine; by autocatalysis). Positions 2517 to 2549 constitute an FATC domain; that stretch reads DTLDVPTQVELLIKQATSHENLCQCYIGWCPFW.

It belongs to the PI3/PI4-kinase family. As to quaternary structure, part of the mechanistic target of rapamycin complex 1 (mTORC1) which contains MTOR, MLST8 and RPTOR. The mTORC1 complex is a 1 Md obligate dimer of two stoichiometric heterotetramers with overall dimensions of 290 A x 210 A x 135 A. It has a rhomboid shape and a central cavity, the dimeric interfaces are formed by interlocking interactions between the two MTOR and the two RPTOR subunits. The MLST8 subunit forms distal foot-like protuberances, and contacts only one MTOR within the complex, while the small AKT1S1/PRAS40 localizes to the midsection of the central core, in close proximity to RPTOR. mTORC1 associates with AKT1S1/PRAS40, which inhibits its activity by blocking MTOR substrate-recruitment site. Component of the mechanistic target of rapamycin complex 2 (mTORC2), consisting in two heterotretramers composed of MTOR, MLST8, RICTOR and MAPKAP1/SIN1. Interacts with PLPP7 and PML. Interacts with PRR5 and RICTOR; the interaction is direct within the mTORC2 complex and interaction with RICTOR is enhanced by deubiquitination of RICTOR by USP9X. mTORC1 and mTORC2 associate with DEPTOR, which regulates their activity. Interacts with WAC; WAC positively regulates MTOR activity by promoting the assembly of the TTT complex composed of TELO2, TTI1 and TTI2 and the RUVBL complex composed of RUVBL1 and RUVBL2 into the TTT-RUVBL complex which leads to the dimerization of the mTORC1 complex and its subsequent activation. Interacts with UBQLN1. Interacts with TTI1 and TELO2. Interacts with CLIP1; phosphorylates and regulates CLIP1. Interacts with NBN. Interacts with HTR6. Interacts with BRAT1. Interacts with MEAK7 (via C-terminal domain); the interaction increases upon nutrient stimulation. Interacts with TM4SF5; the interaction is positively regulated by arginine and is negatively regulated by leucine. Interacts with GPR137B. Interacts with NCKAP1L. Interacts with TPCN1 and TPCN2; the interaction is required for TPCN1 and TPCN2 sensitivity to ATP. Interacts with ATP6V1A and with CRYAB, forming a ternary complex. Interacts with SLC38A7; this interaction mediates the recruitment of mTORC1 to the lysosome and its subsequent activation. Interacts with TSPAN8. Autophosphorylates when part of mTORC1 or mTORC2. Phosphorylation at Ser-1261, Ser-2159 and Thr-2164 promotes autophosphorylation. Phosphorylated at Ser-2448 by RPS6KB1. Phosphorylation in the kinase domain modulates the interactions of MTOR with RPTOR and AKT1S1/PRAS40 and leads to increased intrinsic mTORC1 kinase activity. Phosphorylation at Ser-2159 by TBK1 in response to growth factors and pathogen recognition receptors promotes mTORC1 activity. Phosphorylation at Ser-2159 by TBK1 in response to EGF growth factor promotes mTORC2 activity, leading to AKT1 phosphorylation and activation. Phosphorylation at Thr-2173 in the ATP-binding region by AKT1 strongly reduces kinase activity. Post-translationally, ubiquitinated at Lys-2066 by the SCF(FBXO22) complex via 'Lys-27'-linked ubiquitination prevents mTORC1 substrate recruitment.

Its subcellular location is the lysosome membrane. It localises to the endoplasmic reticulum membrane. The protein resides in the golgi apparatus membrane. The protein localises to the cell membrane. It is found in the mitochondrion outer membrane. Its subcellular location is the cytoplasm. It localises to the nucleus. The protein resides in the PML body. The protein localises to the microsome membrane. It is found in the cytoplasmic vesicle. Its subcellular location is the phagosome. The enzyme catalyses L-seryl-[protein] + ATP = O-phospho-L-seryl-[protein] + ADP + H(+). It catalyses the reaction L-threonyl-[protein] + ATP = O-phospho-L-threonyl-[protein] + ADP + H(+). The catalysed reaction is L-tyrosyl-[protein] + ATP = O-phospho-L-tyrosyl-[protein] + ADP + H(+). Its activity is regulated as follows. The mTORC1 complex is activated in response to nutrients, growth factors or amino acids: activation requires relocalization of the mTORC1 complex to lysosomes that is mediated by the Ragulator complex, SLC38A9, and the Rag GTPases RagA/RRAGA, RagB/RRAGB, RagC/RRAGC and RagD/RRAGD. Activation of mTORC1 by growth factors such as insulin involves AKT1-mediated phosphorylation of TSC1-TSC2, which leads to the activation of the RHEB GTPase a potent activator of the protein kinase activity of mTORC1. Insulin-stimulated and amino acid-dependent phosphorylation at Ser-1261 promotes autophosphorylation and the activation of mTORC1. On the other hand, low cellular energy levels can inhibit mTORC1 through activation of PRKAA1 while hypoxia inhibits mTORC1 through a REDD1-dependent mechanism which may also require PRKAA1. The kinase activity of MTOR within the mTORC1 complex is positively regulated by MLST8. The kinase activity of MTOR is inhibited by DEPTOR and AKT1S1. The non-canonical mTORC1 complex is independent of the RHEB GTPase and specifically mediates phosphorylation of MiT/TFE factors TFEB and TFE3 but not other mTORC1 substrates: it is activated by FLCN, which activates Rag GTPases RagC/RRAGC and RagD/RRAGD. MTOR is the target of the immunosuppressive and anti-cancer drug rapamycin which acts in complex with FKBP1A/FKBP12, and specifically inhibits its kinase activity. mTORC2 is also activated by growth factors, but seems to be nutrient-insensitive. mTORC2 associates and is directly activated by ribosomes. mTORC2 may also be regulated by RHEB but in an indirect manner through the PI3K signaling pathway. Serine/threonine protein kinase which is a central regulator of cellular metabolism, growth and survival in response to hormones, growth factors, nutrients, energy and stress signals. MTOR directly or indirectly regulates the phosphorylation of at least 800 proteins. Functions as part of 2 structurally and functionally distinct signaling complexes mTORC1 and mTORC2 (mTOR complex 1 and 2). In response to nutrients, growth factors or amino acids, mTORC1 is recruited to the lysosome membrane and promotes protein, lipid and nucleotide synthesis by phosphorylating key regulators of mRNA translation and ribosome synthesis. This includes phosphorylation of EIF4EBP1 and release of its inhibition toward the elongation initiation factor 4E (eiF4E). Moreover, phosphorylates and activates RPS6KB1 and RPS6KB2 that promote protein synthesis by modulating the activity of their downstream targets including ribosomal protein S6, eukaryotic translation initiation factor EIF4B, and the inhibitor of translation initiation PDCD4. Stimulates the pyrimidine biosynthesis pathway, both by acute regulation through RPS6KB1-mediated phosphorylation of the biosynthetic enzyme CAD, and delayed regulation, through transcriptional enhancement of the pentose phosphate pathway which produces 5-phosphoribosyl-1-pyrophosphate (PRPP), an allosteric activator of CAD at a later step in synthesis, this function is dependent on the mTORC1 complex. Regulates ribosome synthesis by activating RNA polymerase III-dependent transcription through phosphorylation and inhibition of MAF1 an RNA polymerase III-repressor. Activates dormant ribosomes by mediating phosphorylation of SERBP1, leading to SERBP1 inactivation and reactivation of translation. In parallel to protein synthesis, also regulates lipid synthesis through SREBF1/SREBP1 and LPIN1. To maintain energy homeostasis mTORC1 may also regulate mitochondrial biogenesis through regulation of PPARGC1A. In the same time, mTORC1 inhibits catabolic pathways: negatively regulates autophagy through phosphorylation of ULK1. Under nutrient sufficiency, phosphorylates ULK1 at 'Ser-758', disrupting the interaction with AMPK and preventing activation of ULK1. Also prevents autophagy through phosphorylation of the autophagy inhibitor DAP. Also prevents autophagy by phosphorylating RUBCNL/Pacer under nutrient-rich conditions. Prevents autophagy by mediating phosphorylation of AMBRA1, thereby inhibiting AMBRA1 ability to mediate ubiquitination of ULK1 and interaction between AMBRA1 and PPP2CA. mTORC1 exerts a feedback control on upstream growth factor signaling that includes phosphorylation and activation of GRB10 a INSR-dependent signaling suppressor. Among other potential targets mTORC1 may phosphorylate CLIP1 and regulate microtubules. The mTORC1 complex is inhibited in response to starvation and amino acid depletion. The non-canonical mTORC1 complex, which acts independently of RHEB, specifically mediates phosphorylation of MiT/TFE factors TFEB and TFE3 in the presence of nutrients, promoting their cytosolic retention and inactivation. Upon starvation or lysosomal stress, inhibition of mTORC1 induces dephosphorylation and nuclear translocation of TFEB and TFE3, promoting their transcription factor activity. The mTORC1 complex regulates pyroptosis in macrophages by promoting GSDMD oligomerization. MTOR phosphorylates RPTOR which in turn inhibits mTORC1. As part of the mTORC2 complex, MTOR transduces signals from growth factors to pathways involved in proliferation, cytoskeletal organization, lipogenesis and anabolic output. In response to growth factors, mTORC2 phosphorylates and activates AGC protein kinase family members, including AKT (AKT1, AKT2 and AKT3), PKC (PRKCA, PRKCB and PRKCE) and SGK1. In contrast to mTORC1, mTORC2 is nutrient-insensitive. mTORC2 plays a critical role in AKT1 activation by mediating phosphorylation of different sites depending on the context, such as 'Thr-450', 'Ser-473', 'Ser-477' or 'Thr-479', facilitating the phosphorylation of the activation loop of AKT1 on 'Thr-308' by PDPK1/PDK1 which is a prerequisite for full activation. mTORC2 also regulates the phosphorylation of SGK1 at 'Ser-422'. mTORC2 may regulate the actin cytoskeleton, through phosphorylation of PRKCA, PXN and activation of the Rho-type guanine nucleotide exchange factors RHOA and RAC1A or RAC1B. The mTORC2 complex also phosphorylates various proteins involved in insulin signaling, such as FBXW8 and IGF2BP1. May also regulate insulin signaling by acting as a tyrosine protein kinase that catalyzes phosphorylation of IGF1R and INSR. Regulates osteoclastogenesis by adjusting the expression of CEBPB isoforms. Plays an important regulatory role in the circadian clock function; regulates period length and rhythm amplitude of the suprachiasmatic nucleus (SCN) and liver clocks. The chain is Serine/threonine-protein kinase mTOR from Rattus norvegicus (Rat).